We begin with the raw amino-acid sequence, 144 residues long: Large ribosomal subunit protein uL15 (144 aa).

The segment at 1-49 is disordered; sequence MRLNTLSPAAGSKSAPKRVGRGIGSGLGKTAGRGHKGQKSRSGGGVRVG. Positions 21–31 are enriched in gly residues; sequence RGIGSGLGKTA.

It belongs to the universal ribosomal protein uL15 family. Part of the 50S ribosomal subunit.

In terms of biological role, binds to the 23S rRNA. The polypeptide is Large ribosomal subunit protein uL15 (Shewanella denitrificans (strain OS217 / ATCC BAA-1090 / DSM 15013)).